The following is a 297-amino-acid chain: Lipoyl synthase (297 aa).

The [4Fe-4S] cluster site is built by Cys40, Cys45, Cys51, Cys67, Cys71, Cys74, and Ser280. In terms of domain architecture, Radical SAM core spans Ala53–Ser269.

Belongs to the radical SAM superfamily. Lipoyl synthase family. The cofactor is [4Fe-4S] cluster.

It localises to the cytoplasm. It catalyses the reaction [[Fe-S] cluster scaffold protein carrying a second [4Fe-4S](2+) cluster] + N(6)-octanoyl-L-lysyl-[protein] + 2 oxidized [2Fe-2S]-[ferredoxin] + 2 S-adenosyl-L-methionine + 4 H(+) = [[Fe-S] cluster scaffold protein] + N(6)-[(R)-dihydrolipoyl]-L-lysyl-[protein] + 4 Fe(3+) + 2 hydrogen sulfide + 2 5'-deoxyadenosine + 2 L-methionine + 2 reduced [2Fe-2S]-[ferredoxin]. Its pathway is protein modification; protein lipoylation via endogenous pathway; protein N(6)-(lipoyl)lysine from octanoyl-[acyl-carrier-protein]. Its function is as follows. Catalyzes the radical-mediated insertion of two sulfur atoms into the C-6 and C-8 positions of the octanoyl moiety bound to the lipoyl domains of lipoate-dependent enzymes, thereby converting the octanoylated domains into lipoylated derivatives. The sequence is that of Lipoyl synthase from Bacillus cereus (strain ATCC 14579 / DSM 31 / CCUG 7414 / JCM 2152 / NBRC 15305 / NCIMB 9373 / NCTC 2599 / NRRL B-3711).